Here is an 86-residue protein sequence, read N- to C-terminus: Small ribosomal subunit protein bS20 (86 aa).

The interval 1-27 is disordered; sequence MANSKSAKKRAIQAEKRRQHNASRRSM.

The protein belongs to the bacterial ribosomal protein bS20 family.

In terms of biological role, binds directly to 16S ribosomal RNA. This is Small ribosomal subunit protein bS20 from Vibrio atlanticus (strain LGP32) (Vibrio splendidus (strain Mel32)).